Consider the following 336-residue polypeptide: Fimbrial adhesin PapGII (336 aa).

Residues 1–20 (MKKWFPALLFSLCVSGESSA) form the signal peptide. Cystine bridges form between Cys-64–Cys-138 and Cys-217–Cys-249. Residues Glu-79 and 124–127 (GYKW) each bind D-galactose.

It belongs to the adhesin PapG family.

It localises to the secreted. Its subcellular location is the fimbrium. Tip adhesin component of type P pili that plays a critical role in kidney infection through targeted interaction with the globoseries glycolipids containing the Gal-alpha(1-4)-Gal disaccharide present on uroepithelial cells. In turn, transcriptionally regulates host gene expression in kidney cells, leading to inflammatory pathway activation and renal tissue damage. Acts thereby as key determinant of invasive uropathogenic E.coli (UPEC), which cause pyelonephritis and urinary-source bacteremia. This chain is Fimbrial adhesin PapGII, found in Escherichia coli.